Consider the following 86-residue polypeptide: Omega-theraphotoxin-Hhn1b (86 aa).

A signal peptide spans methionine 1–alanine 21. Positions serine 22–arginine 50 are excised as a propeptide. Intrachain disulfides connect cysteine 52-cysteine 66, cysteine 59-cysteine 71, and cysteine 65-cysteine 78.

Belongs to the neurotoxin 10 (Hwtx-1) family. 17 (Hntx-9) subfamily. As to expression, expressed by the venom gland.

The protein localises to the secreted. Ion channel inhibitor. The protein is Omega-theraphotoxin-Hhn1b of Cyriopagopus hainanus (Chinese bird spider).